A 570-amino-acid chain; its full sequence is MASLITTKAMMSHHHVLSSTRITTLYSDNSIGDQQIKTKPQVPHRLFARRIFGVTRAVINSAAPSPLPEKEKVEGERRCHVAWTSVQQENWEGELTVQGKIPTWLNGTYLRNGPGLWNIGDHDFRHLFDGYSTLVKLQFDGGRIFAAHRLLESDAYKAAKKHNRLCYREFSETPKSVIINKNPFSGIGEIVRLFSGESLTDNANTGVIKLGDGRVMCLTETQKGSILVDHETLETIGKFEYDDVLSDHMIQSAHPIVTETEMWTLIPDLVKPGYRVVRMEAGSNKREVVGRVRCRSGSWGPGWVHSFAVTENYVVIPEMPLRYSVKNLLRAEPTPLYKFEWCPQDGAFIHVMSKLTGEVVASVEVPAYVTFHFINAYEEDKNGDGKATVIIADCCEHNADTRILDMLRLDTLRSSHGHDVLPDARIGRFRIPLDGSKYGKLETAVEAEKHGRAMDMCSINPLYLGQKYRYVYACGAQRPCNFPNALSKVDIVEKKVKNWHEHGMIPSEPFFVPRPGATHEDDGVVISIVSEENGGSFAILLDGSSFEEIARAKFPYGLPYGLHGCWIPKD.

The transit peptide at 1 to 56 (MASLITTKAMMSHHHVLSSTRITTLYSDNSIGDQQIKTKPQVPHRLFARRIFGVTR) directs the protein to the chloroplast. 4 residues coordinate Fe cation: His254, His305, His372, and His563.

The protein belongs to the carotenoid oxygenase family. Fe(2+) is required as a cofactor. As to expression, expressed in flowers, siliques, inflorescence stems, petiole and leaves, and at a much higher level in roots.

The protein resides in the plastid. It localises to the chloroplast. It catalyses the reaction 9-cis-10'-apo-beta-carotenal + 2 O2 = (2E,4E,6E)-7-hydroxy-4-methylhepta-2,4,6-trienal + (11R)-carlactone. The catalysed reaction is all-trans-10'-apo-beta-carotenal + O2 = (2E,4E,6E)-4-methylocta-2,4,6-trienedial + 13-apo-beta-carotenone. Its function is as follows. Involved in strigolactones biosynthesis by cleaving the C(27) 9-cis-10'-apo-beta-carotenal produced by CCD7. Produces the C(19) carlactone and a C(8) hydroxyaldehyde. Also shows lower activity with all-trans-10'-apo-beta-carotenal producing a C(9) dialdehyde and the C(18) 13-apo-beta-carotenone. Strigolactones are hormones that inhibit tillering and shoot branching through the MAX-dependent pathway, contribute to the regulation of shoot architectural response to phosphate-limiting conditions and function as rhizosphere signal that stimulates hyphal branching of arbuscular mycorrhizal fungi and trigger seed germination of root parasitic weeds. Also active on other carotenoid substrates like licopene or zeaxanthin. The sequence is that of Carotenoid cleavage dioxygenase 8, chloroplastic from Arabidopsis thaliana (Mouse-ear cress).